The primary structure comprises 461 residues: MAEVGEIIEGCRLPVLRRNQDNEDEWPLAEILSVKDISGRKLFYVHYIDFNKRLDEWVTHERLDLKKIQFPKKEAKTPTKNGLPGSRPGSPEREVKRKVEVVSPATPVPSETAPASVFPQNGAARRAVAAQPGRKRKSNCLGTDEDSQDSSDGIPSAPRMTGSLVSDRSHDDIVTRMKNIECIELGRHRLKPWYFSPYPQELTTLPVLYLCEFCLKYGRSLKCLQRHLTKCDLRHPPGNEIYRKGTISFFEIDGRKNKSYSQNLCLLAKCFLDHKTLYYDTDPFLFYVMTEYDCKGFHIVGYFSKEKESTEDYNVACILTLPPYQRRGYGKLLIEFSYELSKVEGKTGTPEKPLSDLGLLSYRSYWSQTILEILMGLKSESGERPQITINEISEITSIKKEDVISTLQYLNLINYYKGQYILTLSEDIVDGHERAMLKRLLRIDSKCLHFTPKDWSKRGKW.

Residues 8 to 65 (IEGCRLPVLRRNQDNEDEWPLAEILSVKDISGRKLFYVHYIDFNKRLDEWVTHERLDL) form the Tudor-knot domain. Residue Lys52 is modified to N6-acetyllysine. Residues 70–168 (FPKKEAKTPT…RMTGSLVSDR (99 aa)) form a disordered region. Phosphoserine is present on residues Ser86 and Ser90. Residues 90–100 (SPEREVKRKVE) show a composition bias toward basic and acidic residues. An N6-acetyllysine; by autocatalysis mark is found at Lys96, Lys98, Lys135, and Lys137. Phosphoserine is present on Ser147. Positions 175–452 (TRMKNIECIE…IDSKCLHFTP (278 aa)) constitute an MYST-type HAT domain. Residues 208–233 (LYLCEFCLKYGRSLKCLQRHLTKCDL) form a C2HC MYST-type zinc finger. The residue at position 275 (Lys275) is an N6-acetyllysine; by autocatalysis. Residues 316–461 (ACILTLPPYQ…PKDWSKRGKW (146 aa)) form an interaction with ATF2 region. Residues 318 to 320 (ILT) and 325 to 331 (QRRGYGK) each bind acetyl-CoA. Glu351 functions as the Proton donor/acceptor in the catalytic mechanism. Residues Ser355 and Ser364 each coordinate acetyl-CoA. A Glycyl lysine isopeptide (Lys-Gly) (interchain with G-Cter in SUMO1); alternate cross-link involves residue Lys378. Lys378 is covalently cross-linked (Glycyl lysine isopeptide (Lys-Gly) (interchain with G-Cter in SUMO2); alternate). Lys399 participates in a covalent cross-link: Glycyl lysine isopeptide (Lys-Gly) (interchain with G-Cter in SUMO1).

Belongs to the MYST (SAS/MOZ) family. Component of the NuA4 histone acetyltransferase complex which contains the catalytic subunit KAT5/TIP60 and the subunits EP400, TRRAP/PAF400, BRD8/SMAP, EPC1, DMAP1/DNMAP1, RUVBL1/TIP49, RUVBL2, ING3, actin, ACTL6A/BAF53A, MORF4L1/MRG15, MORF4L2/MRGX, MRGBP, YEATS4/GAS41, VPS72/YL1 and MEAF6. KAT5/TIP60, EPC1, and ING3 together constitute a minimal HAT complex termed Piccolo NuA4. The NuA4 complex interacts with MYC. Interacts with ATM. Interacts with JADE1. Interacts with PLA2G4A/CPLA2, EDNRA and HDAC7. Interacts with the cytoplasmic tail of APP and APBB1/FE65. Interacts with TRIM24 and TRIM68. Forms a complex with SENP6 and UBE2I in response to UV irradiation. Identified in a complex with HINT1. Interacts with ATF2 and CUL3. Interacts with NR1D2 (via N-terminus). Component of a SWR1-like complex. Interacts with FOXP3. Interacts with ZBTB49. Interacts with SRF. Interacts with ATF3; promoting autoacetylation and deubiquitination by USP7. Interacts with EP300/p300; interaction promotes KAT5 autoacetylation. Interacts with PRKDC; interaction is impaired following KAT5 sumoylation. Interacts with GPR50. Phosphorylated on Ser-86 and Ser-90; enhanced during G2/M phase. The phosphorylated form has a higher activity. Phosphorylation at Ser-90 by CDK1 or CDK9 is a prerequisite for phosphorylation at Ser-86 by GSK3. Phosphorylation at Ser-86 by GSK3 (GSK3A or GSK3B) activates acetyltransferase and acyltransferase activities. Phosphorylation at Ser-90 by CDK9 promotes KAT5 recruitment to chromatin. Phosphorylation by VRK1 following DNA damage promotes KAT5 association with chromatin and histone acetyltransferase activity. In terms of processing, autoacetylated. Autoacetylation is required for histone acetyltransferase activity. Autoacetylation at Lys-275 is facilitated by interaction with EP300/p300: it prevents ubiquitination and subsequent degradation by the proteasome and promotes acetylation of target proteins. Deacetylated by HDAC3 and SIRT1. Deacetylation by HDAC3 promotes its ubiquitination and cytoplasmic localization. Post-translationally, sumoylated by UBE2I at Lys-378 and Lys-399, leading to increase of its histone acetyltransferase activity in UV-induced DNA damage response, as well as its translocation to nuclear bodies. Sumoylation with SUMO2 by PIAS4 at Lys-378 promotes repair of DNA double-strand breaks (DSBs) via homologous recombination (HR). Sumoylation by PIAS4 impairs interaction with PRKDC, inhibiting non-homologous end joining (NHEJ)-mediated repair of DSBs, thereby facilitating HR. Desumoylated by SENP3. Ubiquitinated by MDM2, leading to its proteasome-dependent degradation. Ubiquitination is prevented by autoacetylation at Lys-275. Ubiquitinated following deacetylation by HDAC3, leading to cytoplasmic localization. Deubiquitinated by USP7 following interaction with ATF3, promoting its stabilization.

It is found in the nucleus. The protein resides in the chromosome. It localises to the cytoplasm. Its subcellular location is the centromere. The protein localises to the kinetochore. It is found in the cytoskeleton. The protein resides in the spindle pole. It localises to the nucleolus. Its subcellular location is the perinuclear region. The catalysed reaction is L-lysyl-[histone] + acetyl-CoA = N(6)-acetyl-L-lysyl-[histone] + CoA + H(+). The enzyme catalyses L-lysyl-[protein] + acetyl-CoA = N(6)-acetyl-L-lysyl-[protein] + CoA + H(+). It carries out the reaction (2E)-butenoyl-CoA + L-lysyl-[protein] = N(6)-(2E)-butenoyl-L-lysyl-[protein] + CoA + H(+). It catalyses the reaction 2-hydroxyisobutanoyl-CoA + L-lysyl-[protein] = N(6)-(2-hydroxyisobutanoyl)-L-lysyl-[protein] + CoA + H(+). The catalysed reaction is (S)-lactoyl-CoA + L-lysyl-[protein] = N(6)-[(S)-lactoyl]-L-lysyl-[protein] + CoA + H(+). Acyltransferase and acetyltransferase activities are activated by phosphorylation and autoacetylation. Autoacetylation activates the histone acetyltransferase activity. Functionally, catalytic subunit of the NuA4 histone acetyltransferase complex, a multiprotein complex involved in transcriptional activation of select genes principally by acetylation of nucleosomal histones H2A and H4. Histone acetylation alters nucleosome-DNA interactions and promotes interaction of the modified histones with other proteins which positively regulate transcription. The NuA4 histone acetyltransferase complex is required for the activation of transcriptional programs associated with proto-oncogene mediated growth induction, tumor suppressor mediated growth arrest and replicative senescence, apoptosis, and DNA repair. The NuA4 complex plays a direct role in repair of DNA double-strand breaks (DSBs) by promoting homologous recombination (HR): the complex inhibits TP53BP1 binding to chromatin via MBTD1, which recognizes and binds histone H4 trimethylated at 'Lys-20' (H4K20me), and KAT5 that catalyzes acetylation of 'Lys-15' of histone H2A (H2AK15ac), thereby blocking the ubiquitination mark required for TP53BP1 localization at DNA breaks. Also involved in DSB repair by mediating acetylation of 'Lys-5' of histone H2AX (H2AXK5ac), promoting NBN/NBS1 assembly at the sites of DNA damage. The NuA4 complex plays a key role in hematopoietic stem cell maintenance and is required to maintain acetylated H2A.Z/H2AZ1 at MYC target genes. The NuA4 complex is also required for spermatid development by promoting acetylation of histones: histone hyperacetylation is required for histone replacement during the transition from round to elongating spermatids. Component of a SWR1-like complex that specifically mediates the removal of histone H2A.Z/H2AZ1 from the nucleosome. Also acetylates non-histone proteins, such as BMAL1, ATM, AURKB, CHKA, CGAS, ERCC4/XPF, LPIN1, TP53/p53, NDC80/HEC1, NR1D2, RAN, SOX4, FOXP3, SQSTM1, ULK1 and RUBCNL/Pacer. Directly acetylates and activates ATM. Promotes nucleotide excision repair (NER) by mediating acetylation of ERCC4/XPF, thereby promoting formation of the ERCC4-ERCC1 complex. Relieves NR1D2-mediated inhibition of APOC3 expression by acetylating NR1D2. Acts as a regulator of regulatory T-cells (Treg) by catalyzing FOXP3 acetylation, thereby promoting FOXP3 transcriptional repressor activity. Involved in skeletal myoblast differentiation by mediating acetylation of SOX4. Catalyzes acetylation of APBB1/FE65, increasing its transcription activator activity. Promotes transcription elongation during the activation phase of the circadian cycle by catalyzing acetylation of BMAL1, promoting elongation of circadian transcripts. Together with GSK3 (GSK3A or GSK3B), acts as a regulator of autophagy: phosphorylated at Ser-86 by GSK3 under starvation conditions, leading to activate acetyltransferase activity and promote acetylation of key autophagy regulators, such as ULK1 and RUBCNL/Pacer. Acts as a regulator of the cGAS-STING innate antiviral response by catalyzing acetylation the N-terminus of CGAS, thereby promoting CGAS DNA-binding and activation. Also regulates lipid metabolism by mediating acetylation of CHKA or LPIN1. Promotes lipolysis of lipid droplets following glucose deprivation by mediating acetylation of isoform 1 of CHKA, thereby promoting monomerization of CHKA and its conversion into a tyrosine-protein kinase. Acts as a regulator of fatty-acid-induced triacylglycerol synthesis by catalyzing acetylation of LPIN1, thereby promoting the synthesis of diacylglycerol. In addition to protein acetyltransferase, can use different acyl-CoA substrates, such as (2E)-butenoyl-CoA (crotonyl-CoA), S-lactoyl-CoA (lactyl-CoA) and 2-hydroxyisobutanoyl-CoA (2-hydroxyisobutyryl-CoA), and is able to mediate protein crotonylation, lactylation and 2-hydroxyisobutyrylation, respectively. Acts as a key regulator of chromosome segregation and kinetochore-microtubule attachment during mitosis by mediating acetylation or crotonylation of target proteins. Catalyzes acetylation of AURKB at kinetochores, increasing AURKB activity and promoting accurate chromosome segregation in mitosis. Acetylates RAN during mitosis, promoting microtubule assembly at mitotic chromosomes. Acetylates NDC80/HEC1 during mitosis, promoting robust kinetochore-microtubule attachment. Catalyzes crotonylation of MAPRE1/EB1, thereby ensuring accurate spindle positioning in mitosis. Catalyzes lactylation of NBN/NBS1 in response to DNA damage, thereby promoting DNA double-strand breaks (DSBs) via homologous recombination (HR). This is Histone acetyltransferase KAT5 from Pongo abelii (Sumatran orangutan).